The following is a 910-amino-acid chain: Dynein axonemal assembly factor 1 homolog (910 aa).

LRR repeat units lie at residues 43–64 (GLKC…DHQS), 65–86 (QLRC…QHCK), 87–108 (QLDT…GSDI), 111–132 (VLNT…AELR), and 136–157 (FVSV…KVLA). In terms of domain architecture, LRRCT spans 171-209 (PVVNDIPSYRKTLILECKSLTYLDSRPVFDKDRACAEAW). Basic and acidic residues predominate over residues 217–230 (ERKEHQRWKKEEQR). Disordered regions lie at residues 217–275 (ERKE…GDFE), 297–332 (TKGD…DPTL), 344–399 (SRAC…GSIL), 620–642 (EQVP…PVDQ), 662–682 (QVEV…IPEE), and 855–910 (EELE…QGDH). Over residues 314 to 331 (STNSVDYITGSDSNSDPT) the composition is skewed to polar residues. Positions 380–389 (SLSDSSSSSS) are enriched in low complexity. Residues 620-633 (EQVPDEVEANDKAS) are compositionally biased toward basic and acidic residues. Over residues 855–865 (EELEELNEEED) the composition is skewed to acidic residues. Residues 866 to 878 (PALKEAGDFKHDE) are compositionally biased toward basic and acidic residues.

It belongs to the DNAAF1 family.

Its subcellular location is the cell projection. It localises to the cilium. Its function is as follows. Cilium-specific protein required for cilia structures. The chain is Dynein axonemal assembly factor 1 homolog from Anopheles gambiae (African malaria mosquito).